The chain runs to 312 residues: Dihydroorotate dehydrogenase B (NAD(+)), catalytic subunit (312 aa).

Residues Ser-21 and 45-46 (KA) contribute to the FMN site. Residues Lys-45 and 69–73 (NAIGL) contribute to the substrate site. 2 residues coordinate FMN: Asn-99 and Asn-127. Residue Asn-127 coordinates substrate. Catalysis depends on Cys-130, which acts as the Nucleophile. 2 residues coordinate FMN: Lys-165 and Ile-191. 192–193 (NT) provides a ligand contact to substrate. Residues Gly-217, 243–244 (GG), and 265–266 (GT) each bind FMN.

The protein belongs to the dihydroorotate dehydrogenase family. Type 1 subfamily. As to quaternary structure, heterotetramer of 2 PyrK and 2 PyrD type B subunits. Requires FMN as cofactor.

Its subcellular location is the cytoplasm. It catalyses the reaction (S)-dihydroorotate + NAD(+) = orotate + NADH + H(+). It functions in the pathway pyrimidine metabolism; UMP biosynthesis via de novo pathway; orotate from (S)-dihydroorotate (NAD(+) route): step 1/1. Functionally, catalyzes the conversion of dihydroorotate to orotate with NAD(+) as electron acceptor. This is Dihydroorotate dehydrogenase B (NAD(+)), catalytic subunit (pyrD) from Anoxybacillus flavithermus (strain DSM 21510 / WK1).